Reading from the N-terminus, the 283-residue chain is 4-hydroxy-3-methylbut-2-enyl diphosphate reductase (283 aa).

Cys12 contributes to the [4Fe-4S] cluster binding site. (2E)-4-hydroxy-3-methylbut-2-enyl diphosphate-binding residues include His40 and His72. 2 residues coordinate dimethylallyl diphosphate: His40 and His72. His40 and His72 together coordinate isopentenyl diphosphate. Cys94 is a binding site for [4Fe-4S] cluster. His122 contacts (2E)-4-hydroxy-3-methylbut-2-enyl diphosphate. Residue His122 coordinates dimethylallyl diphosphate. His122 contacts isopentenyl diphosphate. Catalysis depends on Glu124, which acts as the Proton donor. (2E)-4-hydroxy-3-methylbut-2-enyl diphosphate is bound at residue Thr160. [4Fe-4S] cluster is bound at residue Cys188. (2E)-4-hydroxy-3-methylbut-2-enyl diphosphate is bound by residues Ser216, Asn218, and Ser259. 3 residues coordinate dimethylallyl diphosphate: Ser216, Asn218, and Ser259. Residues Ser216, Asn218, and Ser259 each coordinate isopentenyl diphosphate.

The protein belongs to the IspH family. [4Fe-4S] cluster is required as a cofactor.

The catalysed reaction is isopentenyl diphosphate + 2 oxidized [2Fe-2S]-[ferredoxin] + H2O = (2E)-4-hydroxy-3-methylbut-2-enyl diphosphate + 2 reduced [2Fe-2S]-[ferredoxin] + 2 H(+). It catalyses the reaction dimethylallyl diphosphate + 2 oxidized [2Fe-2S]-[ferredoxin] + H2O = (2E)-4-hydroxy-3-methylbut-2-enyl diphosphate + 2 reduced [2Fe-2S]-[ferredoxin] + 2 H(+). It participates in isoprenoid biosynthesis; dimethylallyl diphosphate biosynthesis; dimethylallyl diphosphate from (2E)-4-hydroxy-3-methylbutenyl diphosphate: step 1/1. It functions in the pathway isoprenoid biosynthesis; isopentenyl diphosphate biosynthesis via DXP pathway; isopentenyl diphosphate from 1-deoxy-D-xylulose 5-phosphate: step 6/6. Functionally, catalyzes the conversion of 1-hydroxy-2-methyl-2-(E)-butenyl 4-diphosphate (HMBPP) into a mixture of isopentenyl diphosphate (IPP) and dimethylallyl diphosphate (DMAPP). Acts in the terminal step of the DOXP/MEP pathway for isoprenoid precursor biosynthesis. This is 4-hydroxy-3-methylbut-2-enyl diphosphate reductase from Dictyoglomus turgidum (strain DSM 6724 / Z-1310).